Reading from the N-terminus, the 673-residue chain is eEF1A lysine and N-terminal methyltransferase homolog (673 aa).

It belongs to the methyltransferase superfamily.

The enzyme catalyses L-lysyl-[protein] + S-adenosyl-L-methionine = N(6)-methyl-L-lysyl-[protein] + S-adenosyl-L-homocysteine + H(+). The catalysed reaction is N(6)-methyl-L-lysyl-[protein] + S-adenosyl-L-methionine = N(6),N(6)-dimethyl-L-lysyl-[protein] + S-adenosyl-L-homocysteine + H(+). It carries out the reaction N-terminal glycyl-L-lysyl-L-glutamyl-[protein] + 3 S-adenosyl-L-methionine = N-terminal N,N,N-trimethyl-glycyl-L-lysyl-L-glutamyl-[protein] + 3 S-adenosyl-L-homocysteine + 3 H(+). Functionally, dual methyltransferase. It catalyzes N-terminal methylation of target proteins via its C-terminus. It catalyzes dimethylation on lysine residues of target proteins via its N-terminus. This is eEF1A lysine and N-terminal methyltransferase homolog from Drosophila pseudoobscura pseudoobscura (Fruit fly).